A 432-amino-acid polypeptide reads, in one-letter code: Adenylosuccinate synthetase (432 aa).

GTP is bound by residues 12 to 18 and 40 to 42; these read GDEGKGK and GHT. Catalysis depends on Asp-13, which acts as the Proton acceptor. Residues Asp-13 and Gly-40 each coordinate Mg(2+). IMP is bound by residues 13-16, 38-41, Thr-132, Arg-146, Gln-226, Thr-241, and Arg-305; these read DEGK and NAGH. The active-site Proton donor is His-41. Residue 301 to 307 coordinates substrate; that stretch reads VVTGRKR. Residues Arg-307, 333–335, and 415–417 contribute to the GTP site; these read KLD and STS.

The protein belongs to the adenylosuccinate synthetase family. Homodimer. Mg(2+) is required as a cofactor.

Its subcellular location is the cytoplasm. The catalysed reaction is IMP + L-aspartate + GTP = N(6)-(1,2-dicarboxyethyl)-AMP + GDP + phosphate + 2 H(+). It participates in purine metabolism; AMP biosynthesis via de novo pathway; AMP from IMP: step 1/2. Functionally, plays an important role in the de novo pathway of purine nucleotide biosynthesis. Catalyzes the first committed step in the biosynthesis of AMP from IMP. This Mesorhizobium japonicum (strain LMG 29417 / CECT 9101 / MAFF 303099) (Mesorhizobium loti (strain MAFF 303099)) protein is Adenylosuccinate synthetase.